We begin with the raw amino-acid sequence, 172 residues long: Large ribosomal subunit protein uL10 (172 aa).

Belongs to the universal ribosomal protein uL10 family. In terms of assembly, part of the ribosomal stalk of the 50S ribosomal subunit. The N-terminus interacts with L11 and the large rRNA to form the base of the stalk. The C-terminus forms an elongated spine to which L12 dimers bind in a sequential fashion forming a multimeric L10(L12)X complex.

Forms part of the ribosomal stalk, playing a central role in the interaction of the ribosome with GTP-bound translation factors. This is Large ribosomal subunit protein uL10 from Rhodospirillum rubrum (strain ATCC 11170 / ATH 1.1.1 / DSM 467 / LMG 4362 / NCIMB 8255 / S1).